We begin with the raw amino-acid sequence, 362 residues long: 3-dehydroquinate synthase (362 aa).

NAD(+)-binding positions include 71–76 (DGEKYK), 105–109 (GVIGD), 129–130 (TT), Lys142, Lys151, and 169–172 (CLKT). Glu184, His247, and His264 together coordinate Zn(2+).

This sequence belongs to the sugar phosphate cyclases superfamily. Dehydroquinate synthase family. Requires Co(2+) as cofactor. It depends on Zn(2+) as a cofactor. The cofactor is NAD(+).

It localises to the cytoplasm. It carries out the reaction 7-phospho-2-dehydro-3-deoxy-D-arabino-heptonate = 3-dehydroquinate + phosphate. It participates in metabolic intermediate biosynthesis; chorismate biosynthesis; chorismate from D-erythrose 4-phosphate and phosphoenolpyruvate: step 2/7. Its function is as follows. Catalyzes the conversion of 3-deoxy-D-arabino-heptulosonate 7-phosphate (DAHP) to dehydroquinate (DHQ). This chain is 3-dehydroquinate synthase, found in Citrobacter koseri (strain ATCC BAA-895 / CDC 4225-83 / SGSC4696).